Consider the following 149-residue polypeptide: 3-hydroxyacyl-[acyl-carrier-protein] dehydratase FabZ (149 aa).

H52 is a catalytic residue.

The protein belongs to the thioester dehydratase family. FabZ subfamily.

It localises to the cytoplasm. It carries out the reaction a (3R)-hydroxyacyl-[ACP] = a (2E)-enoyl-[ACP] + H2O. In terms of biological role, involved in unsaturated fatty acids biosynthesis. Catalyzes the dehydration of short chain beta-hydroxyacyl-ACPs and long chain saturated and unsaturated beta-hydroxyacyl-ACPs. The chain is 3-hydroxyacyl-[acyl-carrier-protein] dehydratase FabZ from Cupriavidus necator (strain ATCC 17699 / DSM 428 / KCTC 22496 / NCIMB 10442 / H16 / Stanier 337) (Ralstonia eutropha).